We begin with the raw amino-acid sequence, 215 residues long: uncharacterized protein (215 aa).

5 helical membrane passes run 9–29, 50–70, 77–97, 107–127, and 160–180; these read WTFY…TIEG, LTVG…TSLF, IGAL…NFIL, IIVF…YVSA, and ILFA…LTAI.

It is found in the cell membrane. This is an uncharacterized protein from Bacillus subtilis (strain 168).